Reading from the N-terminus, the 635-residue chain is 5-aminolevulinate synthase, non-specific, mitochondrial (635 aa).

A mitochondrion-targeting transit peptide spans 1-56; sequence MEAVVRRCPFLARVSQAFLQKAGPSLLFYAQHCPKMMEAAPPAAARGLATSASRGQ. A compositionally biased stretch (low complexity) spans 44–66; sequence AARGLATSASRGQQVEETPAAQP. Positions 44–94 are disordered; that stretch reads AARGLATSASRGQQVEETPAAQPEAKKAKEVAQQNTDGSQPPAGHPPAAAV. The substrate site is built by Arg212, Ser329, and Lys348. Pyridoxal 5'-phosphate-binding residues include Ser381, His409, and Thr437. Lys440 is an active-site residue. N6-(pyridoxal phosphate)lysine is present on Lys440. 2 residues coordinate pyridoxal 5'-phosphate: Thr469 and Thr470. Position 557 (Thr557) interacts with substrate.

The protein belongs to the class-II pyridoxal-phosphate-dependent aminotransferase family. Homodimer. Requires pyridoxal 5'-phosphate as cofactor. As to expression, ubiquitous.

The protein resides in the mitochondrion inner membrane. It catalyses the reaction succinyl-CoA + glycine + H(+) = 5-aminolevulinate + CO2 + CoA. The protein operates within porphyrin-containing compound metabolism; protoporphyrin-IX biosynthesis; 5-aminolevulinate from glycine: step 1/1. Catalyzes the pyridoxal 5'-phosphate (PLP)-dependent condensation of succinyl-CoA and glycine to form aminolevulinic acid (ALA), with CoA and CO2 as by-products. This is 5-aminolevulinate synthase, non-specific, mitochondrial (ALAS1) from Gallus gallus (Chicken).